Reading from the N-terminus, the 748-residue chain is Elongation factor G, mitochondrial (748 aa).

The N-terminal 14 residues, 1–14 (MTISSFLRVRHSLA), are a transit peptide targeting the mitochondrion. Positions 40–318 (ERIRNIGISA…VLNYLPHPGE (279 aa)) constitute a tr-type G domain. GTP contacts are provided by residues 49-56 (AHIDSGKT), 116-120 (DTPGH), and 170-173 (NKLD).

Belongs to the TRAFAC class translation factor GTPase superfamily. Classic translation factor GTPase family. EF-G/EF-2 subfamily.

The protein resides in the mitochondrion. It functions in the pathway protein biosynthesis; polypeptide chain elongation. Its function is as follows. Mitochondrial GTPase that catalyzes the GTP-dependent ribosomal translocation step during translation elongation. During this step, the ribosome changes from the pre-translocational (PRE) to the post-translocational (POST) state as the newly formed A-site-bound peptidyl-tRNA and P-site-bound deacylated tRNA move to the P and E sites, respectively. Catalyzes the coordinated movement of the two tRNA molecules, the mRNA and conformational changes in the ribosome. The protein is Elongation factor G, mitochondrial of Aedes aegypti (Yellowfever mosquito).